The primary structure comprises 177 residues: Nuclear export protein (177 aa).

Short sequence motifs (nuclear export signal) lie at residues 91 to 100 (LWLPMKSLSL) and 117 to 127 (MKHQILTRLKL).

In terms of assembly, binds M1 protein. May interact with human nucleoporins and exportin XPO1/CRM1.

Its subcellular location is the virion. The protein localises to the host nucleus. Mediates the nuclear export of encapsidated genomic RNAs (ribonucleoproteins, RNPs). Acts as an adapter between viral RNPs complexes and the nuclear export machinery of the cell. Possesses no intrinsic RNA-binding activity, but includes a C-terminal M1-binding domain. This domain is believed to allow recognition of RNPs to which the M1 protein is bound. Because the M1 protein is not available in large quantities until the later stages of infection, such an indirect recognition mechanism probably ensures that genomic RNPs are not exported from the nucleus before sufficient quantities of viral mRNA and progeny genomic RNA have been synthesized. Furthermore, the RNPs enters the cytoplasm only when they have associated with the M1 protein that is necessary to guide them to the plasma membrane. May down-regulate viral RNA synthesis when overproduced. The polypeptide is Nuclear export protein (NS) (Influenza C virus (strain C/Great lakes/1167/1954)).